The following is a 414-amino-acid chain: Serine hydroxymethyltransferase (414 aa).

(6S)-5,6,7,8-tetrahydrofolate-binding positions include L121 and G125 to L127. At K229 the chain carries N6-(pyridoxal phosphate)lysine.

This sequence belongs to the SHMT family. As to quaternary structure, homodimer. The cofactor is pyridoxal 5'-phosphate.

The protein resides in the cytoplasm. The enzyme catalyses (6R)-5,10-methylene-5,6,7,8-tetrahydrofolate + glycine + H2O = (6S)-5,6,7,8-tetrahydrofolate + L-serine. The protein operates within one-carbon metabolism; tetrahydrofolate interconversion. It participates in amino-acid biosynthesis; glycine biosynthesis; glycine from L-serine: step 1/1. Functionally, catalyzes the reversible interconversion of serine and glycine with tetrahydrofolate (THF) serving as the one-carbon carrier. This reaction serves as the major source of one-carbon groups required for the biosynthesis of purines, thymidylate, methionine, and other important biomolecules. Also exhibits THF-independent aldolase activity toward beta-hydroxyamino acids, producing glycine and aldehydes, via a retro-aldol mechanism. The polypeptide is Serine hydroxymethyltransferase (Polaromonas sp. (strain JS666 / ATCC BAA-500)).